We begin with the raw amino-acid sequence, 452 residues long: Transcription factor PERIANTHIA (452 aa).

The bZIP domain occupies 164-227 (DQRTLRRLAQ…RGVSADHTHL (64 aa)). The segment at 166 to 186 (RTLRRLAQNREAARKSRLRKK) is basic motif. The segment at 192–206 (LENSRIRLAQLEEEL) is leucine-zipper. A DOG1 domain is found at 233–449 (VFSFELEYTR…RALSSLWLAR (217 aa)).

The protein belongs to the bZIP family. Interacts with GRXC7/ROXY1. Interacts with BOP1 and BOP2.

It is found in the nucleus. Its function is as follows. Transcriptional activator involved in the determination of floral organ number. Acts to determine floral organ patterning by establishing floral organ primordia in specific numbers and positions. Plays a role in regulating stem cell fate by directly controlling AG expression. Binds to the 5'-AAGAAT-3' cis-acting element found in AG promoter. Might represent a target for a post-translational modification by GRXC7/ROXY1. In Arabidopsis thaliana (Mouse-ear cress), this protein is Transcription factor PERIANTHIA (PAN).